The following is a 217-amino-acid chain: CD99 antigen-like protein 2 (217 aa).

The N-terminal stretch at 1–25 is a signal peptide; it reads MVAWRWACLICLAFSLTTLVQRGSG. Topologically, residues 26–141 are extracellular; the sequence is DTGGFRLEDA…DDSGMSAETG (116 aa). Residues 36–136 form a disordered region; it reads VEGTSSVKQR…GGDNSDDSGM (101 aa). A compositionally biased stretch (low complexity) spans 50–64; that stretch reads TTTTRRPGATRAPAK. Positions 70–82 are enriched in acidic residues; sequence AEDDFNLADALDD. Over residues 83–92 the composition is skewed to basic and acidic residues; sequence QNDRDHDRKK. S134 carries an O-linked (Xyl...) (chondroitin sulfate) serine glycan. A helical membrane pass occupies residues 142-162; it reads TIAGVASALAMALIGAVSSYI. The Cytoplasmic portion of the chain corresponds to 163–217; sequence SYQQKKFCFSIQQGLNADYVKGENLEAVVCEEPQVKYSALQTQSTEPPPPEPPRI.

This sequence belongs to the CD99 family. Post-translationally, O-glycosylated.

Its subcellular location is the cell membrane. It is found in the cell junction. It localises to the secreted. Its function is as follows. Plays a role in a late step of leukocyte extravasation helping cells to overcome the endothelial basement membrane. Acts at the same site as, but independently of, PECAM1. Homophilic adhesion molecule, but these interactions may not be required for cell aggregation. The sequence is that of CD99 antigen-like protein 2 (CD99L2) from Bos taurus (Bovine).